The following is a 90-amino-acid chain: Small ribosomal subunit protein bS20 (90 aa).

This sequence belongs to the bacterial ribosomal protein bS20 family.

In terms of biological role, binds directly to 16S ribosomal RNA. The chain is Small ribosomal subunit protein bS20 from Mesomycoplasma hyopneumoniae (strain 232) (Mycoplasma hyopneumoniae).